The following is a 275-amino-acid chain: Uridine-5'-phosphate dioxygenase (275 aa).

The Fe cation site is built by His-105, Asp-107, and His-247.

Requires Fe(2+) as cofactor.

It catalyses the reaction UMP + 2-oxoglutarate + O2 = uridine-5'-aldehyde + succinate + phosphate + CO2. It participates in antibiotic biosynthesis. With respect to regulation, enhanced by ascorbic acid and inhibited by Zn(2+). In terms of biological role, dioxygenase involved in the biosynthesis of the capuramycin-type nucleoside antibiotic A-102395. Catalyzes the dephosphorylation and oxidation of UMP to generate uridine-5'-aldehyde. Can also use the alternative alpha-keto acids pyruvate and alpha-ketoadipate (2-oxoadipate), with very low efficiency. Cannot use alpha-ketobutyrate, alpha-ketovalerate and oxaloacetate. This is Uridine-5'-phosphate dioxygenase from Amycolatopsis sp.